A 209-amino-acid chain; its full sequence is Probable nicotinate-nucleotide adenylyltransferase (209 aa).

It belongs to the NadD family.

It carries out the reaction nicotinate beta-D-ribonucleotide + ATP + H(+) = deamido-NAD(+) + diphosphate. The protein operates within cofactor biosynthesis; NAD(+) biosynthesis; deamido-NAD(+) from nicotinate D-ribonucleotide: step 1/1. In terms of biological role, catalyzes the reversible adenylation of nicotinate mononucleotide (NaMN) to nicotinic acid adenine dinucleotide (NaAD). This Shewanella woodyi (strain ATCC 51908 / MS32) protein is Probable nicotinate-nucleotide adenylyltransferase.